The chain runs to 292 residues: NAC domain-containing protein 96 (292 aa).

In terms of domain architecture, NAC spans 6-158 (LPPGFRFHPT…AFVLCRVAMK (153 aa)). Residues 106–164 (IGYRKTLVFYKGRAPLGDRSNWIMHEYRLCDDDTSQGSQNLKGAFVLCRVAMKNEIKTN) mediate DNA binding. The tract at residues 171–199 (PSEQTIGSGESSGLSSRVTSPSRDETMPF) is disordered. A compositionally biased stretch (polar residues) spans 172 to 191 (SEQTIGSGESSGLSSRVTSP).

Interacts with ABF2 and ABF4. In terms of tissue distribution, expressed in roots, rosettes leaves, cauline leaves and stems.

The protein resides in the nucleus. Functionally, transcriptional activator involved in the positive regulation of abscisic acid (ABA) responsive genes. Acts as a positive factor of ABA-mediated responses. Involved in the transcriptional activation of ABA-inducible genes in response to dehydration and osmotic stresses. Plays a positive role in both stomatal closure and water loss under dehydration stress conditions. Acts synergistically with ABF2 to activate the dehydration stress-response factor RD29A transcription. Binds to the consensus core cis-acting elements 5'-CGTA-3' and 5'-CACG-3' at the RD29A promoter. Involved in hypocotyl graft union formation. Required for the auxin-mediated promotion of vascular tissue proliferation during hypocotyl graft attachment. In Arabidopsis thaliana (Mouse-ear cress), this protein is NAC domain-containing protein 96.